The following is a 373-amino-acid chain: Chaperone protein DnaJ (373 aa).

The J domain occupies 4-69 (SYYEILEITQ…EKRAIYDRYG (66 aa)). The CR-type zinc-finger motif lies at 135 to 212 (GCKKNIDFTY…CKGLGYNESK (78 aa)). Positions 148, 151, 164, 167, 186, 189, 200, and 203 each coordinate Zn(2+). CXXCXGXG motif repeat units follow at residues 148–155 (CKTCNGTG), 164–171 (CPKCQGRG), 186–193 (CPDCQGIG), and 200–207 (CSDCKGLG).

Belongs to the DnaJ family. Homodimer. Requires Zn(2+) as cofactor.

The protein localises to the cytoplasm. Its function is as follows. Participates actively in the response to hyperosmotic and heat shock by preventing the aggregation of stress-denatured proteins and by disaggregating proteins, also in an autonomous, DnaK-independent fashion. Unfolded proteins bind initially to DnaJ; upon interaction with the DnaJ-bound protein, DnaK hydrolyzes its bound ATP, resulting in the formation of a stable complex. GrpE releases ADP from DnaK; ATP binding to DnaK triggers the release of the substrate protein, thus completing the reaction cycle. Several rounds of ATP-dependent interactions between DnaJ, DnaK and GrpE are required for fully efficient folding. Also involved, together with DnaK and GrpE, in the DNA replication of plasmids through activation of initiation proteins. The protein is Chaperone protein DnaJ of Campylobacter jejuni (strain RM1221).